A 493-amino-acid chain; its full sequence is Cytochrome P450 710A4 (493 aa).

The chain crosses the membrane as a helical span at residues valine 5–leucine 25. Residue cysteine 435 coordinates heme.

It belongs to the cytochrome P450 family. It depends on heme as a cofactor. In terms of tissue distribution, very weak expression in roots and root hairs. Not detected in the root tips.

The protein resides in the membrane. The enzyme catalyses 5-dehydroepisterol + NADPH + O2 + H(+) = ergosta-5,7,22,24(28)-tetraen-3beta-ol + NADP(+) + 2 H2O. Its pathway is steroid biosynthesis; sterol biosynthesis. In terms of biological role, required to form the C-22 double bond in the sterol side chain. Possesses C-22 desaturase activity toward beta-sitosterol and produces stigmasterol. The protein is Cytochrome P450 710A4 of Arabidopsis thaliana (Mouse-ear cress).